The primary structure comprises 237 residues: Carboxy-S-adenosyl-L-methionine synthase (237 aa).

Residues Tyr-36, 61 to 63 (GAS), 86 to 87 (DN), 112 to 113 (DI), Asn-127, and Arg-194 contribute to the S-adenosyl-L-methionine site.

This sequence belongs to the class I-like SAM-binding methyltransferase superfamily. Cx-SAM synthase family. Homodimer.

It carries out the reaction prephenate + S-adenosyl-L-methionine = carboxy-S-adenosyl-L-methionine + 3-phenylpyruvate + H2O. In terms of biological role, catalyzes the conversion of S-adenosyl-L-methionine (SAM) to carboxy-S-adenosyl-L-methionine (Cx-SAM). The sequence is that of Carboxy-S-adenosyl-L-methionine synthase from Ruthia magnifica subsp. Calyptogena magnifica.